Consider the following 183-residue polypeptide: ATP synthase subunit delta (183 aa).

The protein belongs to the ATPase delta chain family. As to quaternary structure, F-type ATPases have 2 components, F(1) - the catalytic core - and F(0) - the membrane proton channel. F(1) has five subunits: alpha(3), beta(3), gamma(1), delta(1), epsilon(1). F(0) has three main subunits: a(1), b(2) and c(10-14). The alpha and beta chains form an alternating ring which encloses part of the gamma chain. F(1) is attached to F(0) by a central stalk formed by the gamma and epsilon chains, while a peripheral stalk is formed by the delta and b chains.

It is found in the cell inner membrane. Functionally, f(1)F(0) ATP synthase produces ATP from ADP in the presence of a proton or sodium gradient. F-type ATPases consist of two structural domains, F(1) containing the extramembraneous catalytic core and F(0) containing the membrane proton channel, linked together by a central stalk and a peripheral stalk. During catalysis, ATP synthesis in the catalytic domain of F(1) is coupled via a rotary mechanism of the central stalk subunits to proton translocation. In terms of biological role, this protein is part of the stalk that links CF(0) to CF(1). It either transmits conformational changes from CF(0) to CF(1) or is implicated in proton conduction. This Ruthia magnifica subsp. Calyptogena magnifica protein is ATP synthase subunit delta.